The chain runs to 326 residues: Flap endonuclease 1 (326 aa).

The N-domain stretch occupies residues 1–100 (MGNAALRQLA…EEVQERRVAR (100 aa)). 7 residues coordinate Mg(2+): Asp-28, Asp-82, Glu-154, Glu-156, Asp-175, Asp-177, and Asp-225. An I-domain region spans residues 118 to 246 (AASRLEARTQ…TAISAINDHG (129 aa)). The tract at residues 318-326 (VQTGLDEWI) is interaction with PCNA.

It belongs to the XPG/RAD2 endonuclease family. FEN1 subfamily. As to quaternary structure, interacts with PCNA. PCNA stimulates the nuclease activity without altering cleavage specificity. Requires Mg(2+) as cofactor.

In terms of biological role, structure-specific nuclease with 5'-flap endonuclease and 5'-3' exonuclease activities involved in DNA replication and repair. During DNA replication, cleaves the 5'-overhanging flap structure that is generated by displacement synthesis when DNA polymerase encounters the 5'-end of a downstream Okazaki fragment. Binds the unpaired 3'-DNA end and kinks the DNA to facilitate 5' cleavage specificity. Cleaves one nucleotide into the double-stranded DNA from the junction in flap DNA, leaving a nick for ligation. Also involved in the base excision repair (BER) pathway. Acts as a genome stabilization factor that prevents flaps from equilibrating into structures that lead to duplications and deletions. Also possesses 5'-3' exonuclease activity on nicked or gapped double-stranded DNA. The chain is Flap endonuclease 1 from Haloquadratum walsbyi (strain DSM 16790 / HBSQ001).